The primary structure comprises 116 residues: FK506-binding protein 1 (116 aa).

In terms of domain architecture, PPIase FKBP-type spans 19–116; that stretch reads GDKVSIHYTG…IFEVELLKIN (98 aa).

Belongs to the FKBP-type PPIase family. FKBP1 subfamily.

Its subcellular location is the cytoplasm. It catalyses the reaction [protein]-peptidylproline (omega=180) = [protein]-peptidylproline (omega=0). With respect to regulation, inhibited by both FK506 and rapamycin. In terms of biological role, PPIases accelerate the folding of proteins. It catalyzes the cis-trans isomerization of proline imidic peptide bonds in oligopeptides. This chain is FK506-binding protein 1 (fpr1), found in Aspergillus oryzae (strain ATCC 42149 / RIB 40) (Yellow koji mold).